Reading from the N-terminus, the 688-residue chain is DNA ligase (688 aa).

NAD(+) contacts are provided by residues 42–46 (DAEYD), 91–92 (SL), and Glu128. Lys130 acts as the N6-AMP-lysine intermediate in catalysis. NAD(+) contacts are provided by Arg151, Glu188, Lys305, and Lys329. Zn(2+) contacts are provided by Cys423, Cys426, Cys441, and Cys447. The region spanning 608-688 (APQGVLAGKT…GMRKLLEGQL (81 aa)) is the BRCT domain.

This sequence belongs to the NAD-dependent DNA ligase family. LigA subfamily. Requires Mg(2+) as cofactor. It depends on Mn(2+) as a cofactor.

The enzyme catalyses NAD(+) + (deoxyribonucleotide)n-3'-hydroxyl + 5'-phospho-(deoxyribonucleotide)m = (deoxyribonucleotide)n+m + AMP + beta-nicotinamide D-nucleotide.. Its function is as follows. DNA ligase that catalyzes the formation of phosphodiester linkages between 5'-phosphoryl and 3'-hydroxyl groups in double-stranded DNA using NAD as a coenzyme and as the energy source for the reaction. It is essential for DNA replication and repair of damaged DNA. This is DNA ligase from Paraburkholderia xenovorans (strain LB400).